We begin with the raw amino-acid sequence, 419 residues long: Transcription factor 7 (419 aa).

Positions 1 to 12 (MPQLDSGGGGAG) are enriched in gly residues. The tract at residues 1–60 (MPQLDSGGGGAGRGDDLGAPDELLAFQDEGEEQDDKNRDSPVGPERDLAELKSSLVNESE) is CTNNB1-binding. 2 disordered regions span residues 1 to 111 (MPQL…LKAP) and 134 to 200 (PASG…SGFY). Basic and acidic residues-rich tracts occupy residues 35 to 50 (DKNRDSPVGPERDLAE) and 86 to 109 (LGREHTSQRLFPDKLPESLEDGLK). Pro residues predominate over residues 143–158 (QPQPPLHNKPGQPPHG). Positions 304 to 372 (IKKPLNAFML…LHMQLYPGWS (69 aa)) form a DNA-binding region, HMG box. Residues 374–406 (RDNYGKKKRRSREKHQESTTGGKRNAFGTYPEK) are disordered. The Nuclear localization signal motif lies at 379–385 (KKKRRSR).

It belongs to the TCF/LEF family. In terms of assembly, binds the armadillo repeat of CTNNB1 and forms a stable complex. Binds TLE5, TLE1, TLE2, TLE3 and TLE4. Interacts with MLLT11. Interacts with DAZAP2. As to quaternary structure, interacts (via N-terminus) with SOX13; inhibits WNT-mediated transcriptional activity. T-cell specific. Expressed in triple negative 2 subpopulations of T-cells and both the gamma-delta and alpha-beta T-cell lineages. Expressed in Il7 receptor positive innate-like T-cells in the mesenteric lymph nodes and spleen (at protein level).

It is found in the nucleus. Functionally, transcriptional activator involved in T-cell lymphocyte differentiation. Necessary for the survival of CD4(+) CD8(+) immature thymocytes. Isoforms lacking the N-terminal CTNNB1 binding domain cannot fulfill this role. Binds to the T-lymphocyte-specific enhancer element (5'-WWCAAAG-3') found in the promoter of the CD3E gene. Represses expression of the T-cell receptor gamma gene in alpha-beta T-cell lineages. Inhibits the developmental program of IL17A effector gamma-delta T-cell subsets via regulating the transcription of T-cell lineage effector proteins. Required for the development of natural killer receptor-positive lymphoid tissue inducer T-cells. TLE1, TLE2, TLE3 and TLE4 repress transactivation mediated by TCF7 and CTNNB1. May also act as feedback transcriptional repressor of CTNNB1 and TCF7L2 target genes. This chain is Transcription factor 7, found in Mus musculus (Mouse).